Consider the following 173-residue polypeptide: MPSNQNRDNFIDKAFTVIAESIVKIMPIAEKEKKAYIYYRDGLAAQNNGDYSEALEYYKESLLLEENKIDRGETLKNMAIIYMSNGEEDLSIETYEKALVENPKQPSCLKNIGLIYEKRGRYAEQNGDLDQRDIWYDKAAEVWSKAVRLYPGGYLDIENWLKNSGRSSIDMYL.

3 TPR repeats span residues 35–68 (AYIY…EENK), 72–105 (GETL…NPKQ), and 120–153 (GRYA…YPGG).

It belongs to the Ycf3 family.

The protein localises to the cellular thylakoid membrane. Its function is as follows. Essential for the assembly of the photosystem I (PSI) complex. May act as a chaperone-like factor to guide the assembly of the PSI subunits. The chain is Photosystem I assembly protein Ycf3 from Prochlorococcus marinus (strain MIT 9215).